Reading from the N-terminus, the 319-residue chain is ATP-dependent 6-phosphofructokinase (319 aa).

ATP is bound at residue G11. 21–25 (RAVTR) is a binding site for ADP. Residues 72–73 (RY) and 102–105 (GDGS) contribute to the ATP site. D103 serves as a coordination point for Mg(2+). 125-127 (TID) is a binding site for substrate. Residue D127 is the Proton acceptor of the active site. Residue R154 coordinates ADP. Substrate-binding positions include R162 and 169-171 (MGR). ADP is bound by residues 185-187 (GAD) and 213-215 (KDH). Residues E222, R243, and 249–252 (HMQR) contribute to the substrate site.

It belongs to the phosphofructokinase type A (PFKA) family. ATP-dependent PFK group I subfamily. Prokaryotic clade 'B1' sub-subfamily. Homotetramer. The cofactor is Mg(2+).

Its subcellular location is the cytoplasm. It carries out the reaction beta-D-fructose 6-phosphate + ATP = beta-D-fructose 1,6-bisphosphate + ADP + H(+). It participates in carbohydrate degradation; glycolysis; D-glyceraldehyde 3-phosphate and glycerone phosphate from D-glucose: step 3/4. With respect to regulation, allosterically activated by ADP and other diphosphonucleosides, and allosterically inhibited by phosphoenolpyruvate. The binding affinities for these effectors are decreased however, and therefore the allosteric effect becomes apparent only at high effector concentrations. Catalyzes the phosphorylation of D-fructose 6-phosphate to fructose 1,6-bisphosphate by ATP, the first committing step of glycolysis. The protein is ATP-dependent 6-phosphofructokinase of Lactobacillus delbrueckii subsp. bulgaricus.